We begin with the raw amino-acid sequence, 112 residues long: Colipase (112 aa).

The first 17 residues, 1-17 (MEKVLALLLVTLTVAYA), serve as a signal peptide directing secretion. Positions 18-22 (VPDPR) are cleaved as a propeptide — enterostatin, activation peptide. 5 disulfide bridges follow: Cys-34–Cys-45, Cys-40–Cys-56, Cys-44–Cys-78, Cys-66–Cys-86, and Cys-80–Cys-104.

The protein belongs to the colipase family. Forms a 1:1 stoichiometric complex with pancreatic lipase. In terms of tissue distribution, expressed by the pancreas.

It localises to the secreted. Functionally, colipase is a cofactor of pancreatic lipase. It allows the lipase to anchor itself to the lipid-water interface. Without colipase the enzyme is washed off by bile salts, which have an inhibitory effect on the lipase. In terms of biological role, enterostatin has a biological activity as a satiety signal. This Sus scrofa (Pig) protein is Colipase (CLPS).